We begin with the raw amino-acid sequence, 340 residues long: Glycerol-3-phosphate dehydrogenase [NAD(P)+] (340 aa).

S12, W13, K34, and K107 together coordinate NADPH. The sn-glycerol 3-phosphate site is built by K107, G138, and S140. A142 is a binding site for NADPH. Positions 193, 246, 256, 257, and 258 each coordinate sn-glycerol 3-phosphate. K193 acts as the Proton acceptor in catalysis. Position 257 (R257) interacts with NADPH. Residues I281 and E283 each contribute to the NADPH site.

The protein belongs to the NAD-dependent glycerol-3-phosphate dehydrogenase family.

The protein resides in the cytoplasm. The enzyme catalyses sn-glycerol 3-phosphate + NAD(+) = dihydroxyacetone phosphate + NADH + H(+). It catalyses the reaction sn-glycerol 3-phosphate + NADP(+) = dihydroxyacetone phosphate + NADPH + H(+). It participates in membrane lipid metabolism; glycerophospholipid metabolism. Its function is as follows. Catalyzes the reduction of the glycolytic intermediate dihydroxyacetone phosphate (DHAP) to sn-glycerol 3-phosphate (G3P), the key precursor for phospholipid synthesis. In Enterococcus faecalis (strain ATCC 700802 / V583), this protein is Glycerol-3-phosphate dehydrogenase [NAD(P)+].